The chain runs to 352 residues: N-acetyl-gamma-glutamyl-phosphate reductase (352 aa).

Cys-155 is a catalytic residue.

It belongs to the NAGSA dehydrogenase family. Type 1 subfamily.

The protein resides in the cytoplasm. The enzyme catalyses N-acetyl-L-glutamate 5-semialdehyde + phosphate + NADP(+) = N-acetyl-L-glutamyl 5-phosphate + NADPH + H(+). It participates in amino-acid biosynthesis; L-arginine biosynthesis; N(2)-acetyl-L-ornithine from L-glutamate: step 3/4. Functionally, catalyzes the NADPH-dependent reduction of N-acetyl-5-glutamyl phosphate to yield N-acetyl-L-glutamate 5-semialdehyde. The chain is N-acetyl-gamma-glutamyl-phosphate reductase from Gloeothece citriformis (strain PCC 7424) (Cyanothece sp. (strain PCC 7424)).